The following is a 288-amino-acid chain: Light-independent protochlorophyllide reductase iron-sulfur ATP-binding protein (288 aa).

ATP is bound by residues 10 to 15 (GIGKST) and lysine 39. Serine 14 lines the Mg(2+) pocket. Cysteine 95 and cysteine 129 together coordinate [4Fe-4S] cluster. ATP is bound at residue 180-181 (NR).

It belongs to the NifH/BchL/ChlL family. Homodimer. Protochlorophyllide reductase is composed of three subunits; ChlL, ChlN and ChlB. The cofactor is [4Fe-4S] cluster.

The catalysed reaction is chlorophyllide a + oxidized 2[4Fe-4S]-[ferredoxin] + 2 ADP + 2 phosphate = protochlorophyllide a + reduced 2[4Fe-4S]-[ferredoxin] + 2 ATP + 2 H2O. It functions in the pathway porphyrin-containing compound metabolism; chlorophyll biosynthesis (light-independent). Component of the dark-operative protochlorophyllide reductase (DPOR) that uses Mg-ATP and reduced ferredoxin to reduce ring D of protochlorophyllide (Pchlide) to form chlorophyllide a (Chlide). This reaction is light-independent. The L component serves as a unique electron donor to the NB-component of the complex, and binds Mg-ATP. The sequence is that of Light-independent protochlorophyllide reductase iron-sulfur ATP-binding protein from Trichodesmium erythraeum (strain IMS101).